The sequence spans 295 residues: Urease accessory protein UreD (295 aa).

This sequence belongs to the UreD family. As to quaternary structure, ureD, UreF and UreG form a complex that acts as a GTP-hydrolysis-dependent molecular chaperone, activating the urease apoprotein by helping to assemble the nickel containing metallocenter of UreC. The UreE protein probably delivers the nickel.

Its subcellular location is the cytoplasm. Functionally, required for maturation of urease via the functional incorporation of the urease nickel metallocenter. The chain is Urease accessory protein UreD from Saccharophagus degradans (strain 2-40 / ATCC 43961 / DSM 17024).